Here is a 122-residue protein sequence, read N- to C-terminus: Large ribosomal subunit protein uL14 (122 aa).

The protein belongs to the universal ribosomal protein uL14 family. Part of the 50S ribosomal subunit. Forms a cluster with proteins L3 and L19. In the 70S ribosome, L14 and L19 interact and together make contacts with the 16S rRNA in bridges B5 and B8.

Binds to 23S rRNA. Forms part of two intersubunit bridges in the 70S ribosome. The protein is Large ribosomal subunit protein uL14 of Cupriavidus metallidurans (strain ATCC 43123 / DSM 2839 / NBRC 102507 / CH34) (Ralstonia metallidurans).